We begin with the raw amino-acid sequence, 272 residues long: Putative phosphoenolpyruvate synthase regulatory protein (272 aa).

151–158 (GVSRSGKT) is an ADP binding site.

It belongs to the pyruvate, phosphate/water dikinase regulatory protein family. PSRP subfamily.

It catalyses the reaction [pyruvate, water dikinase] + ADP = [pyruvate, water dikinase]-phosphate + AMP + H(+). The catalysed reaction is [pyruvate, water dikinase]-phosphate + phosphate + H(+) = [pyruvate, water dikinase] + diphosphate. Its function is as follows. Bifunctional serine/threonine kinase and phosphorylase involved in the regulation of the phosphoenolpyruvate synthase (PEPS) by catalyzing its phosphorylation/dephosphorylation. This is Putative phosphoenolpyruvate synthase regulatory protein from Desulfotalea psychrophila (strain LSv54 / DSM 12343).